The following is an 83-amino-acid chain: Cytochrome b559 subunit alpha (83 aa).

Residues 21–35 (VIHSITIPSLFIAGW) traverse the membrane as a helical segment. Histidine 23 is a binding site for heme.

Belongs to the PsbE/PsbF family. In terms of assembly, heterodimer of an alpha subunit and a beta subunit. PSII is composed of 1 copy each of membrane proteins PsbA, PsbB, PsbC, PsbD, PsbE, PsbF, PsbH, PsbI, PsbJ, PsbK, PsbL, PsbM, PsbT, PsbX, PsbY, PsbZ, Psb30/Ycf12, at least 3 peripheral proteins of the oxygen-evolving complex and a large number of cofactors. It forms dimeric complexes. Heme b is required as a cofactor.

The protein localises to the plastid. Its subcellular location is the chloroplast thylakoid membrane. In terms of biological role, this b-type cytochrome is tightly associated with the reaction center of photosystem II (PSII). PSII is a light-driven water:plastoquinone oxidoreductase that uses light energy to abstract electrons from H(2)O, generating O(2) and a proton gradient subsequently used for ATP formation. It consists of a core antenna complex that captures photons, and an electron transfer chain that converts photonic excitation into a charge separation. The chain is Cytochrome b559 subunit alpha from Adiantum capillus-veneris (Maidenhair fern).